We begin with the raw amino-acid sequence, 299 residues long: Acetylglutamate kinase (299 aa).

Substrate is bound by residues 72-73, Arg94, and Asn196; that span reads GG.

The protein belongs to the acetylglutamate kinase family. ArgB subfamily.

It localises to the cytoplasm. It carries out the reaction N-acetyl-L-glutamate + ATP = N-acetyl-L-glutamyl 5-phosphate + ADP. It functions in the pathway amino-acid biosynthesis; L-arginine biosynthesis; N(2)-acetyl-L-ornithine from L-glutamate: step 2/4. Functionally, catalyzes the ATP-dependent phosphorylation of N-acetyl-L-glutamate. The polypeptide is Acetylglutamate kinase (Paraburkholderia phymatum (strain DSM 17167 / CIP 108236 / LMG 21445 / STM815) (Burkholderia phymatum)).